Reading from the N-terminus, the 376-residue chain is Oligopeptide transport system permease protein OppC (376 aa).

7 helical membrane-spanning segments follow: residues 46-66 (WAIL…IVPL), 149-169 (YPLL…WASM), 173-193 (LWIA…YGAI), 209-229 (IIEI…GATF), 242-262 (VIFT…RIYI), 297-317 (LAVV…SLVF), and 341-361 (IALI…TRVF). An ABC transmembrane type-1 domain is found at 169–362 (MAKSLWIAIV…ILTVSTRVFA (194 aa)).

It belongs to the binding-protein-dependent transport system permease family. OppBC subfamily. As to quaternary structure, the complex is composed of two ATP-binding proteins (OppD and OppF), two transmembrane proteins (OppB and OppC) and a solute-binding protein (OppA).

The protein resides in the cell membrane. Part of the ABC transporter complex OppABCDF involved in the uptake of oligopeptides. Probably responsible for the translocation of the substrate across the membrane. The sequence is that of Oligopeptide transport system permease protein OppC (oppC) from Mycoplasma pneumoniae (strain ATCC 29342 / M129 / Subtype 1) (Mycoplasmoides pneumoniae).